Here is a 693-residue protein sequence, read N- to C-terminus: Tegument protein UL47 (693 aa).

Disordered regions lie at residues 1 to 32 (MSAR…DGVG) and 48 to 126 (ELEA…GYLG). The segment covering 48–57 (ELEALEEMAG) has biased composition (acidic residues). The RNA-binding stretch occupies residues 50-75 (EALEEMAGDEPPVRRRREGPRARRRR). The Nuclear localization signal signature appears at 63 to 75 (RRRREGPRARRRR). Basic residues predominate over residues 63 to 75 (RRRREGPRARRRR). The short motif at 647–670 (SVLGPGVRVVDIMSQFRKLLMGDE) is the Nuclear export signal element.

It belongs to the alphaherpesvirinae HHV-1 UL47 family. Interacts with US3 kinase. Interacts with UL31 and UL34; these interactions seem important for efficient virion nuclear egress. Interacts with UL41/VHS. In terms of processing, phosphorylated by US3. This phosphorylation is required for proper nuclear localization.

The protein localises to the virion tegument. Its subcellular location is the host nucleus. The protein resides in the host cytoplasm. Tegument protein that can bind to various RNA transcripts. Plays a role in the attenuation of selective viral and cellular mRNA degradation by modulating the activity of host shutoff RNase UL41/VHS. Also plays a role in the primary envelopment of virions in the perinuclear space, probably by interacting with two nuclear egress proteins UL31 and UL34. The protein is Tegument protein UL47 of Human herpesvirus 1 (strain F) (HHV-1).